Here is a 399-residue protein sequence, read N- to C-terminus: Elongation factor Tu (399 aa).

One can recognise a tr-type G domain in the interval 10 to 207 (KTHMNVGTIG…AVDSYFPDPV (198 aa)). The interval 19–26 (GHIDHGKT) is G1. GTP is bound at residue 19-26 (GHIDHGKT). Thr26 is a Mg(2+) binding site. Residues 60 to 64 (GITIN) form a G2 region. Positions 81–84 (DCPG) are G3. Residues 81–85 (DCPGH) and 136–139 (NKVD) contribute to the GTP site. Positions 136 to 139 (NKVD) are G4. The segment at 174–176 (SAL) is G5.

Belongs to the TRAFAC class translation factor GTPase superfamily. Classic translation factor GTPase family. EF-Tu/EF-1A subfamily. As to quaternary structure, monomer.

It is found in the cytoplasm. It carries out the reaction GTP + H2O = GDP + phosphate + H(+). Its function is as follows. GTP hydrolase that promotes the GTP-dependent binding of aminoacyl-tRNA to the A-site of ribosomes during protein biosynthesis. The polypeptide is Elongation factor Tu (Petrotoga mobilis (strain DSM 10674 / SJ95)).